The primary structure comprises 1277 residues: MSEKKEEVKNATVKVTVKLPKEDNHSHNTKHLKKTQSSKNNDISFEIGKESKIQTVLDVLAMIPSSKYLTNVGLKTIEGDSQLSDEMSIKEIVGEKSELKLQLILKPYSAREALKHVITVRDFIGFAQETSDGLSEFAISTGSSFSSLPLGPIKERSKQEEKDEKSDPEEKKNTFKDVTDEEKLKFNEMVHEVFSSFKNSSINKLLTSESNIITPCVRSLSFAPYNPVPPFYRSKGHLFYLQIVTLEGESFYITAIPSGFYVNKSNSTKFDPSPKENTDENAHSSLIYYSLFDLIASRSKKFISHVQAFEKKLSALDSTSYVRPSNTFLHKPWFVSSLPPNNPDYLRLQTAALDTTPERNFNDEFQAIKDLTTSTLQDRIEMERLFSKVVHEFSVTAASGAMSIFYSDFVAMNPESPTRDQIFLKDNIFYSYVSDVSGNYEGKGGDEAAIAASNQDLKTINILNRLHMHEVRYLLTTVVEFAGRRILAQTPVPGLLATMGNKIVKDANTGEEVTEDFVNDINVKYGLDEGLGKIVYDADFDSVLEKKFVKAFHLKKHKVNGTELAFSSQSKGIVGFDKRRYILDLANTYPLDINFARQNFDNIEETGNRYPHRQTLLRPELVEKWWNNKVEKEGVEFEKAYEENLFSYNPDAYQVEGIEDANVDEMSNYLQKEVIPSVIQDYLSGNLSTPYNGEHLADTLHKNGINMRYLGKIIELSQKELDSQIVHYEQNLKAVEQDNKEYEDWEKSYLQKIENMIKERQAKINKLVQEGKEVPKELTEDLKLNDEEIKKPTDGKPVVVAYDELVPLIKISELEIVSRSLKHVLKDLSKDVPVFLVPSLVAYVFNMLVGINYNADPKPEPVDEFYPVNKCSFAKLTRSELLEAVSKQAFLRFRHQLPSNWIEAYMENPFTLIRSVSYKFGIQLLNKEYFFTREQLESYKQSLDKKIRNKFVEPPTTFSLSDLTIIPRVKFSEYTSSVSEEFWAQGASMINEDKQSALTLLAQSITVLEDVNNILHPAVAEKYLSLSAIYNKLALYPEAIAFCRKACTIYERVSGIDSFEMMRALTNLAILEFSNESPYNATVVYNRLAEILKVYELPKIHHPAPTSIFNHLEQLALGVQDTKLAIEVLGQLSSYVVELEGKDSLAYGYTESRLGNLFAALKDFHRALEHITVTQGIFTKQLGMNHTHSAQSRQWVNGLSSLIMDLKQKKQLAQDQMSTTGSNSAGHKKTNHRQKKDDVKPELANKSVDELLTFIEGDSSNSKSKNKTNNKKKHGKK.

2 disordered regions span residues 19–39 and 148–176; these read LPKEDNHSHNTKHLKKTQSSK and LPLGPIKERSKQEEKDEKSDPEEKKNTFK. A compositionally biased stretch (basic residues) spans 27–36; that stretch reads HNTKHLKKTQ. Basic and acidic residues predominate over residues 153–176; that stretch reads IKERSKQEEKDEKSDPEEKKNTFK. The region spanning 339-596 is the Clu domain; that stretch reads PPNNPDYLRL…NTYPLDINFA (258 aa). TPR repeat units lie at residues 704–738, 1020–1053, and 1148–1181; these read GINMRYLGKIIELSQKELDSQIVHYEQNLKAVEQD, AEKYLSLSAIYNKLALYPEAIAFCRKACTIYERV, and GYTESRLGNLFAALKDFHRALEHITVTQGIFTKQ. The interval 1212 to 1277 is disordered; the sequence is LAQDQMSTTG…TNNKKKHGKK (66 aa). Basic and acidic residues predominate over residues 1235-1249; that stretch reads KKDDVKPELANKSVD. Ser1247 is subject to Phosphoserine. A compositionally biased stretch (basic residues) spans 1264-1277; the sequence is SKNKTNNKKKHGKK.

The protein belongs to the CLU family. In terms of assembly, may associate with the eukaryotic translation initiation factor 3 (eIF-3) complex. Associates with the 80S ribosome.

The protein resides in the cytoplasm. In terms of biological role, mRNA-binding protein involved in proper cytoplasmic distribution of mitochondria. In Saccharomyces cerevisiae (strain ATCC 204508 / S288c) (Baker's yeast), this protein is Clustered mitochondria protein 1.